Consider the following 103-residue polypeptide: uncharacterized protein (103 aa).

This is an uncharacterized protein from Shigella flexneri.